Here is a 307-residue protein sequence, read N- to C-terminus: Coproporphyrin III ferrochelatase (307 aa).

Fe-coproporphyrin III contacts are provided by residues Tyr12, Arg29, 45-46 (RY), Ser53, and Tyr124. Residues His181 and Glu263 each contribute to the Fe(2+) site.

It belongs to the ferrochelatase family.

It localises to the cytoplasm. The catalysed reaction is Fe-coproporphyrin III + 2 H(+) = coproporphyrin III + Fe(2+). Its pathway is porphyrin-containing compound metabolism; protoheme biosynthesis. Its function is as follows. Involved in coproporphyrin-dependent heme b biosynthesis. Catalyzes the insertion of ferrous iron into coproporphyrin III to form Fe-coproporphyrin III. The protein is Coproporphyrin III ferrochelatase of Staphylococcus aureus (strain COL).